The primary structure comprises 1506 residues: Condensin-2 complex subunit D3 (1506 aa).

The interval 154–194 (SNLTQKRKKDHSKSSKDNYRKSRKRGKPPRKEDYQVDELSR) is disordered. HEAT repeat units follow at residues 442–476 (HKFFVQEIIFDRCLDKAPTVRSKALSSFAHCLELS), 532–567 (PGERCFMTMLRKRIKDEKINVRKSALQVLMSILKHC), and 574–605 (QDLLILQDHCRDPAISVRKQALQSLTELVMAQ). A Phosphoserine modification is found at serine 562. Residues 884–897 (SDHLPSSQGTTDAL) show a composition bias toward polar residues. The tract at residues 884–908 (SDHLPSSQGTTDALDSQPPFQPRSS) is disordered. The stretch at 968–1004 (TVMVDNYIPNISVCLKDSDPFIRKQTLVLLTNLLQEE) is one HEAT 4 repeat. Residues 1213–1270 (ALRELMNYLREVMQDYRDEINDFFAVDKQLASELEYDMKKYNEQLAQEQALTEHANAT) are a coiled coil. Residues 1317-1353 (QDNADVPPTQSRPSAPRSNFTPTLPPISENGPLKIMS) are disordered. Polar residues predominate over residues 1324-1338 (PTQSRPSAPRSNFTP). 4 positions are modified to phosphoserine: serine 1359, serine 1368, serine 1381, and serine 1393. 2 disordered regions span residues 1385–1412 (LPFNVETGSPENPSSHESSLSLEKESDR) and 1473–1506 (PQSPQWNVKSPARSHGSTRSSRRSLRKAPLKTAN). The span at 1393 to 1405 (SPENPSSHESSLS) shows a compositional bias: low complexity. A compositionally biased stretch (basic residues) spans 1492 to 1506 (SSRRSLRKAPLKTAN).

In terms of assembly, component of the condensin-2 complex, which contains the SMC2 and SMC4 heterodimer, and 3 non SMC subunits that probably regulate the complex: NCAPH2, NCAPD3 and NCAPG2.

The protein resides in the nucleus. Its function is as follows. Regulatory subunit of the condensin-2 complex, a complex which establishes mitotic chromosome architecture and is involved in physical rigidity of the chromatid axis. May promote the resolution of double-strand DNA catenanes (intertwines) between sister chromatids. Condensin-mediated compaction likely increases tension in catenated sister chromatids, providing directionality for type II topoisomerase-mediated strand exchanges toward chromatid decatenation. Specifically required for decatenation of centromeric ultrafine DNA bridges during anaphase. Early in neurogenesis, may play an essential role to ensure accurate mitotic chromosome condensation in neuron stem cells, ultimately affecting neuron pool and cortex size. The sequence is that of Condensin-2 complex subunit D3 (Ncapd3) from Mus musculus (Mouse).